Here is a 307-residue protein sequence, read N- to C-terminus: N-acetylmuramic acid 6-phosphate etherase (307 aa).

In terms of domain architecture, SIS spans 59-222 (TTKALSQGGK…STGVMVRLGK (164 aa)). Residue Glu-87 is the Proton donor of the active site. The active site involves Glu-118.

It belongs to the GCKR-like family. MurNAc-6-P etherase subfamily. In terms of assembly, homodimer.

It carries out the reaction N-acetyl-D-muramate 6-phosphate + H2O = N-acetyl-D-glucosamine 6-phosphate + (R)-lactate. It functions in the pathway amino-sugar metabolism; N-acetylmuramate degradation. Functionally, specifically catalyzes the cleavage of the D-lactyl ether substituent of MurNAc 6-phosphate, producing GlcNAc 6-phosphate and D-lactate. This Trichodesmium erythraeum (strain IMS101) protein is N-acetylmuramic acid 6-phosphate etherase.